We begin with the raw amino-acid sequence, 293 residues long: Probable endonuclease 4 (293 aa).

Positions 78, 118, 154, 188, 191, 225, 238, 240, and 270 each coordinate Zn(2+).

The protein belongs to the AP endonuclease 2 family. The cofactor is Zn(2+).

It carries out the reaction Endonucleolytic cleavage to 5'-phosphooligonucleotide end-products.. Its function is as follows. Endonuclease IV plays a role in DNA repair. It cleaves phosphodiester bonds at apurinic or apyrimidinic (AP) sites, generating a 3'-hydroxyl group and a 5'-terminal sugar phosphate. This is Probable endonuclease 4 from Vibrio vulnificus (strain CMCP6).